The following is a 431-amino-acid chain: Serine hydroxymethyltransferase 2 (431 aa).

(6S)-5,6,7,8-tetrahydrofolate-binding positions include Leu-131 and 135 to 137; that span reads GHL. The residue at position 240 (Lys-240) is an N6-(pyridoxal phosphate)lysine. Glu-256 contacts (6S)-5,6,7,8-tetrahydrofolate.

It belongs to the SHMT family. In terms of assembly, homodimer. The cofactor is pyridoxal 5'-phosphate.

It is found in the cytoplasm. It carries out the reaction (6R)-5,10-methylene-5,6,7,8-tetrahydrofolate + glycine + H2O = (6S)-5,6,7,8-tetrahydrofolate + L-serine. It functions in the pathway one-carbon metabolism; tetrahydrofolate interconversion. Its pathway is amino-acid biosynthesis; glycine biosynthesis; glycine from L-serine: step 1/1. In terms of biological role, catalyzes the reversible interconversion of serine and glycine with tetrahydrofolate (THF) serving as the one-carbon carrier. This reaction serves as the major source of one-carbon groups required for the biosynthesis of purines, thymidylate, methionine, and other important biomolecules. Also exhibits THF-independent aldolase activity toward beta-hydroxyamino acids, producing glycine and aldehydes, via a retro-aldol mechanism. This chain is Serine hydroxymethyltransferase 2, found in Vibrio vulnificus (strain CMCP6).